A 186-amino-acid polypeptide reads, in one-letter code: Large ribosomal subunit protein uL10 (186 aa).

This sequence belongs to the universal ribosomal protein uL10 family. Part of the ribosomal stalk of the 50S ribosomal subunit. The N-terminus interacts with L11 and the large rRNA to form the base of the stalk. The C-terminus forms an elongated spine to which L12 dimers bind in a sequential fashion forming a multimeric L10(L12)X complex.

Forms part of the ribosomal stalk, playing a central role in the interaction of the ribosome with GTP-bound translation factors. This Roseiflexus sp. (strain RS-1) protein is Large ribosomal subunit protein uL10.